A 187-amino-acid polypeptide reads, in one-letter code: uncharacterized protein (187 aa).

The tract at residues 1–95 (MTTMKRSADP…GSTRPSARYG (95 aa)) is disordered. Positions 46–80 (RARRSRGPKRFLGKRNYRRARARKPGKRDRAHSSK) are enriched in basic residues.

The protein resides in the mitochondrion. This is an uncharacterized protein from Arabidopsis thaliana (Mouse-ear cress).